A 339-amino-acid chain; its full sequence is Transposase for insertion sequence element IS1086 (339 aa).

The Integrase catalytic domain maps to D176–L329.

This sequence belongs to the transposase IS30 family.

Required for the transposition of the insertion element. This chain is Transposase for insertion sequence element IS1086 (IS1086), found in Cupriavidus metallidurans (strain ATCC 43123 / DSM 2839 / NBRC 102507 / CH34) (Ralstonia metallidurans).